The chain runs to 444 residues: Cysteine proteinase 2 (444 aa).

The or 27 signal peptide spans M1–A19. A propeptide spans A20–S124 (activation peptide). A disulfide bridge links C147 with C188. C150 is an active-site residue. Residue N228 is glycosylated (N-linked (GlcNAc...) asparagine). Catalysis depends on residues H289 and N309. N-linked (GlcNAc...) asparagine glycosylation is present at N372.

This sequence belongs to the peptidase C1 family.

It localises to the lysosome. Its function is as follows. The cysteine proteinases have a potential role in host-parasite interaction and virulence. The chain is Cysteine proteinase 2 (CYS2) from Leishmania pifanoi.